A 56-amino-acid polypeptide reads, in one-letter code: Large ribosomal subunit protein bL33 (56 aa).

The segment covering 1–12 (MATKGGRDKIKL) has biased composition (basic and acidic residues). A disordered region spans residues 1-24 (MATKGGRDKIKLESTAGTGHFYTT). Positions 15–24 (TAGTGHFYTT) are enriched in polar residues.

It belongs to the bacterial ribosomal protein bL33 family.

The polypeptide is Large ribosomal subunit protein bL33 (Paracidovorax citrulli (strain AAC00-1) (Acidovorax citrulli)).